A 266-amino-acid chain; its full sequence is Glucosamine-6-phosphate deaminase (266 aa).

Aspartate 72 serves as the catalytic Proton acceptor; for enolization step. Aspartate 141 functions as the For ring-opening step in the catalytic mechanism. The active-site Proton acceptor; for ring-opening step is histidine 143. Glutamate 148 serves as the catalytic For ring-opening step.

Belongs to the glucosamine/galactosamine-6-phosphate isomerase family. NagB subfamily. In terms of assembly, homohexamer.

The catalysed reaction is alpha-D-glucosamine 6-phosphate + H2O = beta-D-fructose 6-phosphate + NH4(+). Its pathway is amino-sugar metabolism; N-acetylneuraminate degradation; D-fructose 6-phosphate from N-acetylneuraminate: step 5/5. With respect to regulation, allosterically activated by N-acetylglucosamine 6-phosphate (GlcNAc6P). Catalyzes the reversible isomerization-deamination of glucosamine 6-phosphate (GlcN6P) to form fructose 6-phosphate (Fru6P) and ammonium ion. The sequence is that of Glucosamine-6-phosphate deaminase from Tolumonas auensis (strain DSM 9187 / NBRC 110442 / TA 4).